Reading from the N-terminus, the 366-residue chain is MKFVVSRNELGNLIKKIQSVVPQNTPIPVLTHVLIETYNDELVFTATDLTVSTRCVTKAKVYEKGAISIPSKRFFQLVKELTEANLEISSSAGEMAQITSGSSCFRLLSMEKEDFPMLPDIQNALRFSLPAEQLKTMLQRTSFAVSREESRYVLTGVLLAIANGVATIVGTDGKRLAKIDAEVTLDKSFSGEYIIPIKAVEEIIKMCSDEGEATIFLDQDKIAVECDNTLLITKLLSGEFPDFSPVISTESNVKLDLHREELITLLKQVALFTNESSHSVKFSFLPGELTLTANCTKVGEGKVSMAVNYSGELLEIAFNPFFFLDILKHSKDELVSLGISDSYNPGIITDSASGLFVIMPMRLHDD.

It belongs to the beta sliding clamp family. Forms a ring-shaped head-to-tail homodimer around DNA which binds and tethers DNA polymerases and other proteins to the DNA. The DNA replisome complex has a single clamp-loading complex (3 tau and 1 each of delta, delta', psi and chi subunits) which binds 3 Pol III cores (1 core on the leading strand and 2 on the lagging strand) each with a beta sliding clamp dimer. Additional proteins in the replisome are other copies of gamma, psi and chi, Ssb, DNA helicase and RNA primase.

The protein localises to the cytoplasm. Functionally, confers DNA tethering and processivity to DNA polymerases and other proteins. Acts as a clamp, forming a ring around DNA (a reaction catalyzed by the clamp-loading complex) which diffuses in an ATP-independent manner freely and bidirectionally along dsDNA. Initially characterized for its ability to contact the catalytic subunit of DNA polymerase III (Pol III), a complex, multichain enzyme responsible for most of the replicative synthesis in bacteria; Pol III exhibits 3'-5' exonuclease proofreading activity. The beta chain is required for initiation of replication as well as for processivity of DNA replication. The sequence is that of Beta sliding clamp (dnaN) from Chlamydia pneumoniae (Chlamydophila pneumoniae).